We begin with the raw amino-acid sequence, 487 residues long: Putative beta-glucosidase 35 (487 aa).

An N-terminal signal peptide occupies residues 1–27 (MGIRMGRRLLLITLLLGALLCNNVAYA). Gln48 contributes to the a beta-D-glucoside binding site. N-linked (GlcNAc...) asparagine glycans are attached at residues Asn76 and Asn116. Residues His151 and 200 to 201 (NE) contribute to the a beta-D-glucoside site. Glu201 acts as the Proton donor in catalysis. A disulfide bridge connects residues Cys220 and Cys228. Residue Tyr344 participates in a beta-D-glucoside binding. Asn369 carries N-linked (GlcNAc...) asparagine glycosylation. An a beta-D-glucoside-binding site is contributed by Glu414. Glu414 functions as the Nucleophile in the catalytic mechanism. N-linked (GlcNAc...) asparagine glycans are attached at residues Asn418 and Asn419. Phe458 is an a beta-D-glucoside binding site.

Belongs to the glycosyl hydrolase 1 family.

The enzyme catalyses Hydrolysis of terminal, non-reducing beta-D-glucosyl residues with release of beta-D-glucose.. The chain is Putative beta-glucosidase 35 (BGLU35) from Oryza sativa subsp. japonica (Rice).